Consider the following 212-residue polypeptide: Large ribosomal subunit protein uL3 (212 aa).

It belongs to the universal ribosomal protein uL3 family. As to quaternary structure, part of the 50S ribosomal subunit. Forms a cluster with proteins L14 and L19.

Functionally, one of the primary rRNA binding proteins, it binds directly near the 3'-end of the 23S rRNA, where it nucleates assembly of the 50S subunit. This is Large ribosomal subunit protein uL3 from Ruminiclostridium cellulolyticum (strain ATCC 35319 / DSM 5812 / JCM 6584 / H10) (Clostridium cellulolyticum).